Here is a 288-residue protein sequence, read N- to C-terminus: ATP synthase gamma chain (288 aa).

The protein belongs to the ATPase gamma chain family. As to quaternary structure, F-type ATPases have 2 components, CF(1) - the catalytic core - and CF(0) - the membrane proton channel. CF(1) has five subunits: alpha(3), beta(3), gamma(1), delta(1), epsilon(1). CF(0) has three main subunits: a, b and c.

It localises to the cell membrane. Produces ATP from ADP in the presence of a proton gradient across the membrane. The gamma chain is believed to be important in regulating ATPase activity and the flow of protons through the CF(0) complex. This is ATP synthase gamma chain from Symbiobacterium thermophilum (strain DSM 24528 / JCM 14929 / IAM 14863 / T).